An 828-amino-acid chain; its full sequence is Glycerol-3-phosphate acyltransferase (828 aa).

The HXXXXD motif signature appears at 309-314; the sequence is CHRSHI.

It belongs to the GPAT/DAPAT family.

It is found in the cell inner membrane. The enzyme catalyses sn-glycerol 3-phosphate + an acyl-CoA = a 1-acyl-sn-glycero-3-phosphate + CoA. The protein operates within phospholipid metabolism; CDP-diacylglycerol biosynthesis; CDP-diacylglycerol from sn-glycerol 3-phosphate: step 1/3. The chain is Glycerol-3-phosphate acyltransferase from Pseudomonas putida (strain GB-1).